We begin with the raw amino-acid sequence, 271 residues long: Phosphonoacetaldehyde hydrolase (271 aa).

Residue D12 is the Nucleophile of the active site. The Mg(2+) site is built by D12 and A14. K54 serves as the catalytic Schiff-base intermediate with substrate. D188 serves as a coordination point for Mg(2+).

It belongs to the HAD-like hydrolase superfamily. PhnX family. As to quaternary structure, homodimer. The cofactor is Mg(2+).

The catalysed reaction is phosphonoacetaldehyde + H2O = acetaldehyde + phosphate + H(+). Involved in phosphonate degradation. This chain is Phosphonoacetaldehyde hydrolase, found in Vibrio campbellii (strain ATCC BAA-1116).